We begin with the raw amino-acid sequence, 501 residues long: Probable cytochrome P450 28d2 (501 aa).

C446 contacts heme.

Belongs to the cytochrome P450 family. Heme serves as cofactor.

The protein localises to the endoplasmic reticulum membrane. Its subcellular location is the microsome membrane. Its function is as follows. May be involved in the metabolism of insect hormones and in the breakdown of synthetic insecticides. This chain is Probable cytochrome P450 28d2 (Cyp28d2), found in Drosophila melanogaster (Fruit fly).